Consider the following 355-residue polypeptide: RNA 3'-terminal phosphate cyclase (355 aa).

Residues Q109 and 291–295 (HLADQ) contribute to the ATP site. The active-site Tele-AMP-histidine intermediate is H316.

The protein belongs to the RNA 3'-terminal cyclase family. Type 1 subfamily.

The protein resides in the cytoplasm. It catalyses the reaction a 3'-end 3'-phospho-ribonucleotide-RNA + ATP = a 3'-end 2',3'-cyclophospho-ribonucleotide-RNA + AMP + diphosphate. Its function is as follows. Catalyzes the conversion of 3'-phosphate to a 2',3'-cyclic phosphodiester at the end of RNA. The mechanism of action of the enzyme occurs in 3 steps: (A) adenylation of the enzyme by ATP; (B) transfer of adenylate to an RNA-N3'P to produce RNA-N3'PP5'A; (C) and attack of the adjacent 2'-hydroxyl on the 3'-phosphorus in the diester linkage to produce the cyclic end product. The biological role of this enzyme is unknown but it is likely to function in some aspects of cellular RNA processing. This Koribacter versatilis (strain Ellin345) protein is RNA 3'-terminal phosphate cyclase.